Reading from the N-terminus, the 63-residue chain is Large ribosomal subunit protein bL28 (63 aa).

The protein belongs to the bacterial ribosomal protein bL28 family.

This chain is Large ribosomal subunit protein bL28, found in Solibacter usitatus (strain Ellin6076).